Consider the following 306-residue polypeptide: Palmitoyl-protein thioesterase 1 (306 aa).

A signal peptide spans 1–27 (MASPSCLWLLAVALLPWTCAARALHHL). Intrachain disulfides connect cysteine 45–cysteine 46, cysteine 96–cysteine 128, and cysteine 152–cysteine 160. Serine 115 is a catalytic residue. N-linked (GlcNAc...) asparagine glycans are attached at residues asparagine 197, asparagine 212, and asparagine 232. Active-site residues include aspartate 233 and histidine 289.

Belongs to the palmitoyl-protein thioesterase family. In terms of assembly, interacts with CLN5, ATP5F1A and ATP5F1B. Post-translationally, glycosylated.

It is found in the lysosome. It localises to the secreted. Its subcellular location is the golgi apparatus. The protein resides in the endoplasmic reticulum. The catalysed reaction is S-hexadecanoyl-L-cysteinyl-[protein] + H2O = L-cysteinyl-[protein] + hexadecanoate + H(+). The enzyme catalyses hexadecanoyl-CoA + H2O = hexadecanoate + CoA + H(+). It catalyses the reaction S-hexadecanoyl-N-acetylcysteamine + H2O = N-acetylcysteamine + hexadecanoate + H(+). It carries out the reaction S-hexadecanoyl-N-acetylcysteine methyl ester + H2O = N-acetylcysteine methyl ester + hexadecanoate + H(+). Palmitoylation reduces PPT1 enzymatic activity. Functionally, has thioesterase activity against fatty acid thioesters with 14 -18 carbons, including palmitoyl-CoA, S-palmitoyl-N-acetylcysteamine, and palmitoylated proteins. In contrast to PPT2, PPT1 can hydrolyze palmitoylated proteins and palmitoylcysteine. The polypeptide is Palmitoyl-protein thioesterase 1 (PPT1) (Macaca fascicularis (Crab-eating macaque)).